Reading from the N-terminus, the 86-residue chain is MAHKKAAGSSRNGRDSESKRLGVKRFGGQFVKAGNILVRQRGTEFHPGENVGCGRDHTLFAKQDGFVKFNVGGPLNRRTVSIVAAE.

The disordered stretch occupies residues M1–L21.

The protein belongs to the bacterial ribosomal protein bL27 family.

The polypeptide is Large ribosomal subunit protein bL27 (Hahella chejuensis (strain KCTC 2396)).